Reading from the N-terminus, the 464-residue chain is Bifunctional protein GlmU (464 aa).

The tract at residues 1 to 236 (MRAVILAAGL…PTEALGVNTR (236 aa)) is pyrophosphorylase. Residues 6-9 (LAAG), Lys-20, and 77-78 (GT) contribute to the UDP-N-acetyl-alpha-D-glucosamine site. Asp-102 is a Mg(2+) binding site. The UDP-N-acetyl-alpha-D-glucosamine site is built by Gly-145, Glu-161, Asn-176, and Asn-234. Residue Asn-234 participates in Mg(2+) binding. A linker region spans residues 237–257 (WDLALVENVIKLKIARYWAER). Residues 258–464 (GVTVHYPETV…GRGKKKLQKD (207 aa)) are N-acetyltransferase. 2 residues coordinate UDP-N-acetyl-alpha-D-glucosamine: Arg-340 and Lys-358. The Proton acceptor role is filled by His-370. Positions 373 and 384 each coordinate UDP-N-acetyl-alpha-D-glucosamine. Acetyl-CoA contacts are provided by residues Ala-387, 393 to 394 (NY), Ser-412, Gly-430, and Arg-447.

In the N-terminal section; belongs to the N-acetylglucosamine-1-phosphate uridyltransferase family. The protein in the C-terminal section; belongs to the transferase hexapeptide repeat family. As to quaternary structure, homotrimer. Requires Mg(2+) as cofactor.

The protein resides in the cytoplasm. It catalyses the reaction alpha-D-glucosamine 1-phosphate + acetyl-CoA = N-acetyl-alpha-D-glucosamine 1-phosphate + CoA + H(+). It carries out the reaction N-acetyl-alpha-D-glucosamine 1-phosphate + UTP + H(+) = UDP-N-acetyl-alpha-D-glucosamine + diphosphate. Its pathway is nucleotide-sugar biosynthesis; UDP-N-acetyl-alpha-D-glucosamine biosynthesis; N-acetyl-alpha-D-glucosamine 1-phosphate from alpha-D-glucosamine 6-phosphate (route II): step 2/2. The protein operates within nucleotide-sugar biosynthesis; UDP-N-acetyl-alpha-D-glucosamine biosynthesis; UDP-N-acetyl-alpha-D-glucosamine from N-acetyl-alpha-D-glucosamine 1-phosphate: step 1/1. It functions in the pathway bacterial outer membrane biogenesis; LPS lipid A biosynthesis. Its function is as follows. Catalyzes the last two sequential reactions in the de novo biosynthetic pathway for UDP-N-acetylglucosamine (UDP-GlcNAc). The C-terminal domain catalyzes the transfer of acetyl group from acetyl coenzyme A to glucosamine-1-phosphate (GlcN-1-P) to produce N-acetylglucosamine-1-phosphate (GlcNAc-1-P), which is converted into UDP-GlcNAc by the transfer of uridine 5-monophosphate (from uridine 5-triphosphate), a reaction catalyzed by the N-terminal domain. The chain is Bifunctional protein GlmU from Aquifex aeolicus (strain VF5).